Consider the following 84-residue polypeptide: Esculentin-1B (84 aa).

An N-terminal signal peptide occupies residues 1–22 (MFTLKKPLLLIVLLGMISLSLC). A propeptide spanning residues 23–38 (EQERNADEEEGSEIKR) is cleaved from the precursor. An intrachain disulfide couples cysteine 78 to cysteine 84.

This sequence belongs to the frog skin active peptide (FSAP) family. Brevinin subfamily. As to expression, expressed by the skin glands.

It localises to the secreted. Its function is as follows. Shows antibacterial activity against representative Gram-negative and Gram-positive bacterial species, and hemolytic activity. This is Esculentin-1B from Pelophylax lessonae (Pool frog).